Reading from the N-terminus, the 492-residue chain is Catalase (492 aa).

Active-site residues include His-65 and Asn-138. Tyr-348 provides a ligand contact to heme.

This sequence belongs to the catalase family. As to quaternary structure, homotetramer. The cofactor is heme. As to expression, in stems, leaves, roots and developing fruits.

It localises to the cytoplasm. The protein localises to the cytosol. The protein resides in the peroxisome matrix. It catalyses the reaction 2 H2O2 = O2 + 2 H2O. Catalyzes the degradation of hydrogen peroxide (H(2)O(2)) generated by peroxisomal oxidases to water and oxygen, thereby protecting cells from the toxic effects of hydrogen peroxide. This Capsicum annuum (Capsicum pepper) protein is Catalase (CAT).